The following is a 395-amino-acid chain: MHVRAPWSLPEPTLAYFPNARFVPSDRDLGAGALRLVGEDCPAPTRGGVAVADGPTEPGFNDFHHVPVLAQRCVELLRPALTRHHADGSEAVLVDATIGAGGHAERFLTELPGLRLIGLDRDPSALEIVRTRLARFADRVTLVHTRYDGLASALTELGYGAAQSIDGALFDLGVSSMQLDQAERGFAYSKDAPLDMRMNPQSALSAADIINTYDEAALADILHRYGEERFARRIAARIIRRRADKPFTTTAELVALLYEAIPAAARRTGGHPAKRTFQALRIAVNDELGSLRSAIPAAMDALAVGGRIVVMAYQSLEDRIVKRVFADAVASRTPMDLPVELPGHGPRFRSLTHGAERADAAEVERNPRSAPVRLRALERLELEALPRQGTGKGES.

S-adenosyl-L-methionine is bound by residues 101 to 103, Asp120, Tyr147, Asp171, and Gln178; that span reads GGH.

The protein belongs to the methyltransferase superfamily. RsmH family.

It is found in the cytoplasm. The catalysed reaction is cytidine(1402) in 16S rRNA + S-adenosyl-L-methionine = N(4)-methylcytidine(1402) in 16S rRNA + S-adenosyl-L-homocysteine + H(+). In terms of biological role, specifically methylates the N4 position of cytidine in position 1402 (C1402) of 16S rRNA. The protein is Ribosomal RNA small subunit methyltransferase H of Mycobacterium marinum (strain ATCC BAA-535 / M).